Here is a 147-residue protein sequence, read N- to C-terminus: Myoglobin (147 aa).

The region spanning 2-141 (ADFDAVLKCW…IIADLEANYK (140 aa)) is the Globin domain. A nitrite-binding site is contributed by histidine 60. O2 is bound at residue histidine 60. Histidine 89 serves as a coordination point for heme b.

Belongs to the globin family. As to quaternary structure, monomeric.

Its subcellular location is the cytoplasm. It localises to the sarcoplasm. The enzyme catalyses Fe(III)-heme b-[protein] + nitric oxide + H2O = Fe(II)-heme b-[protein] + nitrite + 2 H(+). It carries out the reaction H2O2 + AH2 = A + 2 H2O. Functionally, monomeric heme protein which primary function is to store oxygen and facilitate its diffusion within muscle tissues. Reversibly binds oxygen through a pentacoordinated heme iron and enables its timely and efficient release as needed during periods of heightened demand. Depending on the oxidative conditions of tissues and cells, and in addition to its ability to bind oxygen, it also has a nitrite reductase activity whereby it regulates the production of bioactive nitric oxide. Under stress conditions, like hypoxia and anoxia, it also protects cells against reactive oxygen species thanks to its pseudoperoxidase activity. In Thunnus alalunga (Albacore), this protein is Myoglobin (mb).